A 380-amino-acid polypeptide reads, in one-letter code: MAAAAAAPGGGGGEPRGTAGVVPVVPGEVEVVKGQPFDVGPRYTQLQYIGEGAYGMVSSAYDHVRKTRVAIKKISPFEHQTYCQRTLREIQILLRFRHENVIGIRDILRAPTLEAMRDVYIVQDLMETDLYKLLKSQQLSNDHICYFLYQILRGLKYIHSANVLHRDLKPSNLLINTTCDLKICDFGLARIADPEHDHTGFLTEYVATRWYRAPEIMLNSKGYTKSIDIWSVGCILAEMLSNRPIFPGKHYLDQLNHILGILGSPSQEDLNCIINMKARNYLQSLPSKTKVAWAKLFPKSDSKALDLLDRMLTFNPNKRITVEEALAHPYLEQYYDPTDEPVAEEPFTFDMELDDLPKERLKELIFQETARFQPGAPEGP.

An N-acetylalanine modification is found at alanine 2. A Protein kinase domain is found at 43 to 331 (YTQLQYIGEG…VEEALAHPYL (289 aa)). Residues 49–57 (IGEGAYGMV) and lysine 72 each bind ATP. The Proton acceptor role is filled by aspartate 167. Threonine 199 is subject to Phosphothreonine. The residue at position 203 (threonine 203) is a Phosphothreonine; by MAP2K1 and MAP2K2. Residues 203 to 205 (TEY) carry the TXY motif. Tyrosine 205 is subject to Phosphotyrosine; by MAP2K1 and MAP2K2. Threonine 208 carries the post-translational modification Phosphothreonine; by autocatalysis.

The protein belongs to the protein kinase superfamily. CMGC Ser/Thr protein kinase family. MAP kinase subfamily. As to quaternary structure, binds both upstream activators and downstream substrates in multimolecular complexes. Found in a complex with at least BRAF, HRAS, MAP2K1/MEK1, MAPK3 and RGS14. Interacts with TPR. Interacts with ADAM15, ARRB2, CANX, DAPK1 (via death domain), HSF4, IER3, MAP2K1/MEK1, NISCH, and SGK1. Interacts with MORG1. Interacts with PEA15. Interacts with isoform 1 of MKNK2 and this binding prevents from dephosphorylation and inactivation. Interacts with CDKN2AIP. Interacts with HSF1 (via D domain and preferentially with hyperphosphorylated form); this interaction occurs upon heat shock. Interacts with CAVIN4. Interacts with GIT1; this interaction is necessary for MAPK3 localization to focal adhesions. Interacts with ZNF263. Interacts with EBF4. It depends on Mg(2+) as a cofactor. In terms of processing, dually phosphorylated on Thr-203 and Tyr-205, which activates the enzyme. Ligand-activated ALK induces tyrosine phosphorylation. Dephosphorylated by PTPRJ at Tyr-205. Autophosphorylated on threonine and tyrosine residues in vitro. Phosphorylated upon FLT3 and KIT signaling. Post-translationally, ubiquitinated by TRIM15 via 'Lys-63'-linked ubiquitination; leading to activation. Deubiquitinated by CYLD.

The protein resides in the cytoplasm. It localises to the nucleus. The protein localises to the membrane. Its subcellular location is the caveola. It is found in the cell junction. The protein resides in the focal adhesion. The catalysed reaction is L-seryl-[protein] + ATP = O-phospho-L-seryl-[protein] + ADP + H(+). The enzyme catalyses L-threonyl-[protein] + ATP = O-phospho-L-threonyl-[protein] + ADP + H(+). With respect to regulation, phosphorylated by MAP2K1/MEK1 and MAP2K2/MEK2 on Thr-203 and Tyr-205 in response to external stimuli like insulin or NGF. Both phosphorylations are required for activity. This phosphorylation causes dramatic conformational changes, which enable full activation and interaction of MAPK1/ERK2 with its substrates. Dephosphorylated and inactivated by DUSP3, DUSP6 and DUSP9. Its function is as follows. Serine/threonine kinase which acts as an essential component of the MAP kinase signal transduction pathway. MAPK1/ERK2 and MAPK3/ERK1 are the 2 MAPKs which play an important role in the MAPK/ERK cascade. They participate also in a signaling cascade initiated by activated KIT and KITLG/SCF. Depending on the cellular context, the MAPK/ERK cascade mediates diverse biological functions such as cell growth, adhesion, survival and differentiation through the regulation of transcription, translation, cytoskeletal rearrangements. The MAPK/ERK cascade also plays a role in initiation and regulation of meiosis, mitosis, and postmitotic functions in differentiated cells by phosphorylating a number of transcription factors. About 160 substrates have already been discovered for ERKs. Many of these substrates are localized in the nucleus, and seem to participate in the regulation of transcription upon stimulation. However, other substrates are found in the cytosol as well as in other cellular organelles, and those are responsible for processes such as translation, mitosis and apoptosis. Moreover, the MAPK/ERK cascade is also involved in the regulation of the endosomal dynamics, including lysosome processing and endosome cycling through the perinuclear recycling compartment (PNRC); as well as in the fragmentation of the Golgi apparatus during mitosis. The substrates include transcription factors (such as ATF2, BCL6, ELK1, ERF, FOS, HSF4 or SPZ1), cytoskeletal elements (such as CANX, CTTN, GJA1, MAP2, MAPT, PXN, SORBS3 or STMN1), regulators of apoptosis (such as BAD, BTG2, CASP9, DAPK1, IER3, MCL1 or PPARG), regulators of translation (such as EIF4EBP1) and a variety of other signaling-related molecules (like ARHGEF2, DEPTOR, FRS2 or GRB10). Protein kinases (such as RAF1, RPS6KA1/RSK1, RPS6KA3/RSK2, RPS6KA2/RSK3, RPS6KA6/RSK4, SYK, MKNK1/MNK1, MKNK2/MNK2, RPS6KA5/MSK1, RPS6KA4/MSK2, MAPKAPK3 or MAPKAPK5) and phosphatases (such as DUSP1, DUSP4, DUSP6 or DUSP16) are other substrates which enable the propagation the MAPK/ERK signal to additional cytosolic and nuclear targets, thereby extending the specificity of the cascade. This chain is Mitogen-activated protein kinase 3 (Mapk3), found in Mus musculus (Mouse).